Consider the following 132-residue polypeptide: Matrix protein (132 aa).

The protein resides in the virion membrane. In terms of biological role, envelope protein that may play a role in host-cell attachment and viral genome entry. The polypeptide is Matrix protein (Halorubrum pleomorphic virus 1 (HRPV-1)).